Consider the following 403-residue polypeptide: MSETELSKEDAVTKKDNEEQVKKALLDPTKKRKAEDEIEIDLKSSIPLSKKQKRLLRRGKVTLEELNAKYNIDPKSIEEYKEDAEKKKSGASEKDAQGEESTINTPTGDESGEVVKKKKKDENKYGVWIGNLSFDTTKDDLVRFFIAKTKDNEDEKSRVTEQDITRLSMPRVAAKNSNAMKNKGFCYMFFKNVEQMKAVLELSESHLNGRNMLIKDSENYSGRPDKDDLVAMSKNPPSRILFVGNLSFDVTDDLLRKHFQHCGDIVKIRMATFEDSGKCKGFAFIDFKNEEGSTNALKDKSCRKIAGRPLRMEYGEDRSKRQVRKKVENVSRNNSSSFDISNNKGYDRAGQDNGSKPEYKRSNANRRPPVDSNNRTKSSVALATAQRGSAAIVPSQGKKVKFD.

Basic and acidic residues-rich tracts occupy residues 1–35 (MSET…RKAE) and 75–97 (KSIE…KDAQ). Disordered stretches follow at residues 1 to 43 (MSET…IDLK) and 72 to 116 (IDPK…EVVK). N-acetylserine is present on Ser-2. Ser-2 bears the Phosphoserine mark. The span at 99–108 (EESTINTPTG) shows a compositional bias: polar residues. Thr-105 carries the post-translational modification Phosphothreonine. 2 consecutive RRM domains span residues 125–219 (YGVW…DSEN) and 239–317 (RILF…YGED). Positions 313-329 (EYGEDRSKRQVRKKVEN) are enriched in basic and acidic residues. The tract at residues 313–403 (EYGEDRSKRQ…PSQGKKVKFD (91 aa)) is disordered. The segment covering 330–344 (VSRNNSSSFDISNNK) has biased composition (polar residues). The residue at position 335 (Ser-335) is a Phosphoserine. The segment covering 345–361 (GYDRAGQDNGSKPEYKR) has biased composition (basic and acidic residues). The span at 371 to 381 (DSNNRTKSSVA) shows a compositional bias: polar residues.

It localises to the nucleus. It is found in the nucleolus. This chain is Nucleolar protein 13 (NOP13), found in Saccharomyces cerevisiae (strain ATCC 204508 / S288c) (Baker's yeast).